The following is a 252-amino-acid chain: Protein PF0476 (252 aa).

This sequence belongs to the CinA family.

The chain is Protein PF0476 from Pyrococcus furiosus (strain ATCC 43587 / DSM 3638 / JCM 8422 / Vc1).